A 30-amino-acid chain; its full sequence is Sperm protamine P5 (30 aa).

Positions 1–30 are disordered; that stretch reads YRRRRRRGRRGRRRRGRRRRSRGRRRAHGG.

As to expression, testis.

It is found in the nucleus. Its subcellular location is the chromosome. Protamines substitute for histones in the chromatin of sperm during the haploid phase of spermatogenesis. They compact sperm DNA into a highly condensed, stable and inactive complex. The chain is Sperm protamine P5 from Octopus vulgaris (Common octopus).